A 443-amino-acid polypeptide reads, in one-letter code: 3-phosphoshikimate 1-carboxyvinyltransferase (443 aa).

Residues Lys-24, Ser-25, and Arg-29 each contribute to the 3-phosphoshikimate site. Lys-24 lines the phosphoenolpyruvate pocket. Positions 96 and 124 each coordinate phosphoenolpyruvate. 4 residues coordinate 3-phosphoshikimate: Ser-168, Gln-170, Asp-316, and Lys-343. Phosphoenolpyruvate is bound at residue Gln-170. The active-site Proton acceptor is Asp-316. Residues Arg-347 and Arg-391 each contribute to the phosphoenolpyruvate site.

Belongs to the EPSP synthase family. In terms of assembly, monomer.

It is found in the cytoplasm. It carries out the reaction 3-phosphoshikimate + phosphoenolpyruvate = 5-O-(1-carboxyvinyl)-3-phosphoshikimate + phosphate. The protein operates within metabolic intermediate biosynthesis; chorismate biosynthesis; chorismate from D-erythrose 4-phosphate and phosphoenolpyruvate: step 6/7. Its function is as follows. Catalyzes the transfer of the enolpyruvyl moiety of phosphoenolpyruvate (PEP) to the 5-hydroxyl of shikimate-3-phosphate (S3P) to produce enolpyruvyl shikimate-3-phosphate and inorganic phosphate. This Dichelobacter nodosus (Bacteroides nodosus) protein is 3-phosphoshikimate 1-carboxyvinyltransferase.